The sequence spans 203 residues: MSSKLRVGVAGPVGSGKTALLETLCLSLKKNYEIAVVTNDIYTKEDANFLINKKVLEEGRIIGVETGGCPHTAIREDCSLNKNAVLDLENKYNPLDFVFVESGGDNLASSFSPELVDLSIYVIDVSAGDKIPRKGGPGITRSDLLLINKIDLADMVGADLNIMKSDTEFMRKGKPWFFTNLSIGKGVKEISQFLESHLPNNQN.

Gly-11 to Thr-18 contributes to the GTP binding site.

The protein belongs to the SIMIBI class G3E GTPase family. UreG subfamily. In terms of assembly, homodimer. UreD, UreF and UreG form a complex that acts as a GTP-hydrolysis-dependent molecular chaperone, activating the urease apoprotein by helping to assemble the nickel containing metallocenter of UreC. The UreE protein probably delivers the nickel.

Its subcellular location is the cytoplasm. Its function is as follows. Facilitates the functional incorporation of the urease nickel metallocenter. This process requires GTP hydrolysis, probably effectuated by UreG. The polypeptide is Urease accessory protein UreG (Prochlorococcus marinus (strain MIT 9215)).